A 597-amino-acid polypeptide reads, in one-letter code: MGKKKIATLSAILSLSITSGVSSTTAYADNKETNYINENDVKLNGKVSEALQSNMKIELENGMTKPIYSLDEAIIENLFVETEVDSDRDGKKDRVSVKVMRPKTDSNVKVPVIYEMSPYRAGLKDVPVYNVDEELYAYEGKPYGAVNLGSYGNYYVPRGYAVILGESIGTGKSEGCPTTGDEQEILGTKSVIDWVNGRAKAYKENGEEVKADWSTGNVGMTGVSYNGTLPNAVATTGVEGLKTIIPIAAISSWYDYYRANGAVIAPGGYQGEDTDNMAEAVLTRENPEVCGQVIKELTAGQDRKTGNYNDFWDKRNYVKDAKNVKASVFVVHGLNDWNVKTKQFAQWWEALGENNVPRKMWLHQGGHGGTSTNDWQRTQNKWFDYWLYGIENGIMNEPMVDVQRENKTWDKMKNWPDPSAVPSKVRMYLSNKAVNLPLSMGSVNKMFSFVDDAKMKSNQLVANPELEVANRLVYTMPVLQKDTRISGTPKISITGNIDRSVSNLTALLVDYGGAKPEIVTRGWMDPQNVKSIENSTAIQPGKDYTFTWDMQPDDYVFKAGHQIGVVLMASDYDYTIRPKAGTKLTVKLSEVTLPIVK.

Active-site charge relay system residues include serine 224, aspartate 336, and histidine 367.

Belongs to the peptidase S15 family.

It catalyses the reaction Hydrolyzes Xaa-Pro-|- bonds to release unblocked, N-terminal dipeptides from substrates including Ala-Pro-|-p-nitroanilide and (sequentially) Tyr-Pro-|-Phe-Pro-|-Gly-Pro-|-Ile.. In Bacillus anthracis, this protein is Putative Xaa-Pro dipeptidyl-peptidase.